The primary structure comprises 382 residues: DNA double-strand break repair protein Mre11 (382 aa).

Residues Asp-8, His-10, Asp-49, and Asp-84 each coordinate Mn(2+). His-85 functions as the Proton donor in the catalytic mechanism. The Mn(2+) site is built by His-156, His-187, and His-189.

It belongs to the MRE11/RAD32 family. As to quaternary structure, homodimer. Forms a heterotetramer composed of two Mre11 subunits and two Rad50 subunits. Interacts with Rad50 and HerA. Mn(2+) serves as cofactor.

With respect to regulation, nuclease activity is regulated by Rad50. Functionally, part of the Rad50/Mre11 complex, which is involved in the early steps of DNA double-strand break (DSB) repair. The complex may facilitate opening of the processed DNA ends to aid in the recruitment of HerA and NurA. Mre11 binds to DSB ends and has both double-stranded 3'-5' exonuclease activity and single-stranded endonuclease activity. Recruited immediately to chromosomal DNA after gamma irradiation, and remains DNA bound in the course of DNA repair. This is DNA double-strand break repair protein Mre11 from Sulfolobus acidocaldarius (strain ATCC 33909 / DSM 639 / JCM 8929 / NBRC 15157 / NCIMB 11770).